The following is a 648-amino-acid chain: Serine/threonine-protein kinase plk-1 (648 aa).

The interval 1 to 24 (MNRLPNIAKPPQKSNQRKEKAPPE) is disordered. A Protein kinase domain is found at 38 to 289 (YEKGRFLGKG…AKQVQRDGFF (252 aa)). Residues 44–52 (LGKGGFAHC) and Lys-67 each bind ATP. The active-site Proton acceptor is Asp-161. POLO box domains are found at residues 412-492 (WISK…YMND) and 514-596 (TLRV…RLMS). The span at 612–629 (PRSMAAARSASAGSRGPN) shows a compositional bias: low complexity.

The protein belongs to the protein kinase superfamily. Ser/Thr protein kinase family. CDC5/Polo subfamily. As to quaternary structure, interacts with mex-5, mex-6 and spat-1. In terms of tissue distribution, embryos.

It is found in the cytoplasm. The protein localises to the cytoskeleton. Its subcellular location is the microtubule organizing center. The protein resides in the centrosome. It localises to the midbody. It is found in the nucleus. The protein localises to the chromosome. Its subcellular location is the centromere. The protein resides in the kinetochore. It catalyses the reaction L-seryl-[protein] + ATP = O-phospho-L-seryl-[protein] + ADP + H(+). The enzyme catalyses L-threonyl-[protein] + ATP = O-phospho-L-threonyl-[protein] + ADP + H(+). Functionally, required for oocyte nuclear envelope breakdown before entry of oocyte into spermatheca. In meiotic cells, required for spindle dynamics and probably for spindle attachment to the chromosomes. Zygotic role in the development of the germline and nerve cord. In mitotic cells, plays a role in spindle organization and centrosome maturation. Involved in asymmetric nuclear localization of cdc-25.1 during embryogenesis which affects cell division timing. Together with plk-2, regulates cytoplasm polarity in early embryos. May play a minor role in chromosome pairing and synapsis during oocyte meiosis I. The protein is Serine/threonine-protein kinase plk-1 (plk-1) of Caenorhabditis elegans.